The sequence spans 1159 residues: Cation channel sperm-associated auxiliary subunit gamma (1159 aa).

The signal sequence occupies residues 1–35 (MCGPAMFPAGPRWPRVRVLQVLWALLAVLLASRRL). Residues 36 to 1065 (WAIKDFEECT…IHGLPLSPKR (1030 aa)) lie on the Extracellular side of the membrane. Disulfide bonds link Cys44-Cys105 and Cys159-Cys165. A glycan (N-linked (GlcNAc...) asparagine) is linked at Asn102. N-linked (GlcNAc...) asparagine glycosylation is present at Asn177. Cys288 and Cys343 are disulfide-bonded. Asn355 is a glycosylation site (N-linked (GlcNAc...) asparagine). Residues Cys394 and Cys402 are joined by a disulfide bond. 2 N-linked (GlcNAc...) asparagine glycosylation sites follow: Asn426 and Asn574. Disulfide bonds link Cys638-Cys860, Cys806-Cys834, Cys882-Cys1046, Cys909-Cys918, and Cys1010-Cys1016. The chain crosses the membrane as a helical span at residues 1066–1087 (ALFILMVSLSVFVGLVIFYIAF). Residues 1088-1159 (CLLWPLVVKG…KEAVERQLMT (72 aa)) lie on the Cytoplasmic side of the membrane. The interval 1138–1159 (FSSRMTEDKAEPKEAVERQLMT) is disordered. Residues 1142–1159 (MTEDKAEPKEAVERQLMT) are compositionally biased toward basic and acidic residues.

This sequence belongs to the CATSPERG family. As to quaternary structure, component of the CatSper complex or CatSpermasome composed of the core pore-forming members CATSPER1, CATSPER2, CATSPER3 and CATSPER4 as well as auxiliary members CATSPERB, CATSPERG, CATSPERD, CATSPERE, CATSPERZ, SCLO6C1, TMEM249, TMEM262 and EFCAB9. HSPA1 may be an additional auxiliary complex member. The core complex members CATSPER1, CATSPER2, CATSPER3 and CATSPER4 form a heterotetrameric channel. The auxiliary CATSPERB, CATSPERG, CATSPERD and CATSPERE subunits form a pavilion-like structure over the pore which stabilizes the complex through interactions with CATSPER4, CATSPER3, CATSPER1 and CATSPER2 respectively. TMEM262/CATSPERH interacts with CATSPERB, further stabilizing the complex. C2CD6/CATSPERT interacts at least with CATSPERD and is required for targeting the CatSper complex in the flagellar membrane.

Its subcellular location is the cell projection. It localises to the cilium. The protein resides in the flagellum membrane. Functionally, auxiliary component of the CatSper complex, a complex involved in sperm cell hyperactivation. Sperm cell hyperactivation is needed for sperm motility which is essential late in the preparation of sperm for fertilization. This Macaca fascicularis (Crab-eating macaque) protein is Cation channel sperm-associated auxiliary subunit gamma.